The chain runs to 385 residues: DNA replication and repair protein RecF (385 aa).

Residue 30-37 (GANAAGKT) coordinates ATP.

Belongs to the RecF family.

It localises to the cytoplasm. The RecF protein is involved in DNA metabolism; it is required for DNA replication and normal SOS inducibility. RecF binds preferentially to single-stranded, linear DNA. It also seems to bind ATP. This chain is DNA replication and repair protein RecF, found in Herpetosiphon aurantiacus (strain ATCC 23779 / DSM 785 / 114-95).